Reading from the N-terminus, the 273-residue chain is 4-hydroxy-tetrahydrodipicolinate reductase (273 aa).

NAD(+) is bound by residues 12–17 and Glu38; that span reads GAGGRM. Residue Arg39 participates in NADP(+) binding. NAD(+) is bound by residues 102-104 and 126-129; these read GTT and AANF. The active-site Proton donor/acceptor is His159. His160 is a binding site for (S)-2,3,4,5-tetrahydrodipicolinate. The Proton donor role is filled by Lys163. (S)-2,3,4,5-tetrahydrodipicolinate is bound at residue 169 to 170; that stretch reads GT.

Belongs to the DapB family. As to quaternary structure, homotetramer.

It is found in the cytoplasm. It carries out the reaction (S)-2,3,4,5-tetrahydrodipicolinate + NAD(+) + H2O = (2S,4S)-4-hydroxy-2,3,4,5-tetrahydrodipicolinate + NADH + H(+). It catalyses the reaction (S)-2,3,4,5-tetrahydrodipicolinate + NADP(+) + H2O = (2S,4S)-4-hydroxy-2,3,4,5-tetrahydrodipicolinate + NADPH + H(+). Its pathway is amino-acid biosynthesis; L-lysine biosynthesis via DAP pathway; (S)-tetrahydrodipicolinate from L-aspartate: step 4/4. Catalyzes the conversion of 4-hydroxy-tetrahydrodipicolinate (HTPA) to tetrahydrodipicolinate. This is 4-hydroxy-tetrahydrodipicolinate reductase from Yersinia pestis bv. Antiqua (strain Antiqua).